The chain runs to 351 residues: S-adenosylmethionine:tRNA ribosyltransferase-isomerase (351 aa).

It belongs to the QueA family. As to quaternary structure, monomer.

It localises to the cytoplasm. It catalyses the reaction 7-aminomethyl-7-carbaguanosine(34) in tRNA + S-adenosyl-L-methionine = epoxyqueuosine(34) in tRNA + adenine + L-methionine + 2 H(+). Its pathway is tRNA modification; tRNA-queuosine biosynthesis. Functionally, transfers and isomerizes the ribose moiety from AdoMet to the 7-aminomethyl group of 7-deazaguanine (preQ1-tRNA) to give epoxyqueuosine (oQ-tRNA). This chain is S-adenosylmethionine:tRNA ribosyltransferase-isomerase, found in Hahella chejuensis (strain KCTC 2396).